Reading from the N-terminus, the 733-residue chain is Protein ROG3 (733 aa).

Positions 460-463 (PPNY) match the PY-motif motif. A disordered region spans residues 518-566 (RDNLGLPPSASSAAASRSLSPLLNVPAPEDGTERILPQSALGPNSGSVP). Residues 523-540 (LPPSASSAAASRSLSPLL) show a composition bias toward low complexity. A PY-motif motif is present at residues 625–628 (PPSY). Disordered regions lie at residues 636 to 658 (QPRK…SIPT) and 693 to 733 (ELTS…GNKR). Positions 646-658 (RNSSTTLSSSIPT) are enriched in low complexity.

Belongs to the arrestin family. In terms of assembly, interacts with RSP5 via its 2 PY-motifs.

Functionally, involved in resistance to GST substrate o-dinitrobenzene (o-DNB). In Saccharomyces cerevisiae (strain ATCC 204508 / S288c) (Baker's yeast), this protein is Protein ROG3 (ROG3).